We begin with the raw amino-acid sequence, 324 residues long: MAPTLKLQCHFILVCLLALRGESRYLELREAVDHDPFPHLAGGASPKRELEGEPLYRRALRCVDMLSLQGQFTFTADRRQLHCATFFIAEPEEFITIHYDLVSIDCLRGDILQVFDGWILKGEKFPSSQDHPLPTTERYVDFCDSGLSRRSIRSSQNVAMIFFRVHEPGNGFTITVKTEPNLFPCNIISQTPNGRFTLVMPHQHRNCSFSIIYPVAIKISDLTLGHLNGLQLKKSSAGCGGIGDFVELLGGTGLDPSKMLLLADLCYPLRGPAQMKVGCDHTVLRMVSSGKHINRVTFEYRQLEPYELENPNGNSIQEFCLSTL.

The N-terminal stretch at 1–23 (MAPTLKLQCHFILVCLLALRGES) is a signal peptide. 5 disulfides stabilise this stretch: cysteine 62–cysteine 83, cysteine 106–cysteine 143, cysteine 185–cysteine 207, cysteine 239–cysteine 266, and cysteine 279–cysteine 320. Asparagine 206 carries N-linked (GlcNAc...) asparagine glycosylation.

Belongs to the CRF-binding protein family.

The protein resides in the secreted. In terms of biological role, binds CRF and inactivates it. May prevent inappropriate pituitary-adrenal stimulation in pregnancy. In Ovis aries (Sheep), this protein is Corticotropin-releasing factor-binding protein (CRHBP).